The sequence spans 346 residues: Tyrosine--tRNA ligase (346 aa).

Residues 47–56 carry the 'HIGH' region motif; sequence PSGRIHIAQA. Positions 230–234 match the 'KMSKS' region motif; sequence KMSKS. K233 lines the ATP pocket.

Belongs to the class-I aminoacyl-tRNA synthetase family. In terms of assembly, homodimer.

The enzyme catalyses tRNA(Tyr) + L-tyrosine + ATP = L-tyrosyl-tRNA(Tyr) + AMP + diphosphate + H(+). Catalyzes the attachment of tyrosine to tRNA(Tyr) in a two-step reaction: tyrosine is first activated by ATP to form Tyr-AMP and then transferred to the acceptor end of tRNA(Tyr). The chain is Tyrosine--tRNA ligase (YARS) from Acanthamoeba polyphaga (Amoeba).